We begin with the raw amino-acid sequence, 143 residues long: Large ribosomal subunit protein uL11 (143 aa).

This sequence belongs to the universal ribosomal protein uL11 family. Part of the ribosomal stalk of the 50S ribosomal subunit. Interacts with L10 and the large rRNA to form the base of the stalk. L10 forms an elongated spine to which L12 dimers bind in a sequential fashion forming a multimeric L10(L12)X complex. Post-translationally, one or more lysine residues are methylated.

Forms part of the ribosomal stalk which helps the ribosome interact with GTP-bound translation factors. The sequence is that of Large ribosomal subunit protein uL11 from Allorhizobium ampelinum (strain ATCC BAA-846 / DSM 112012 / S4) (Agrobacterium vitis (strain S4)).